Reading from the N-terminus, the 288-residue chain is Polyamine aminopropyltransferase (288 aa).

The region spanning 9–238 (ETLHDQFGQY…GIMTFAWATD (230 aa)) is the PABS domain. Q33 is a binding site for S-methyl-5'-thioadenosine. Spermidine is bound by residues H64 and D88. Residues E108 and 140–141 (DG) contribute to the S-methyl-5'-thioadenosine site. D158 functions as the Proton acceptor in the catalytic mechanism. 158–161 (DCTD) contacts spermidine. P165 is an S-methyl-5'-thioadenosine binding site.

This sequence belongs to the spermidine/spermine synthase family. In terms of assembly, homodimer or homotetramer.

It localises to the cytoplasm. The catalysed reaction is S-adenosyl 3-(methylsulfanyl)propylamine + putrescine = S-methyl-5'-thioadenosine + spermidine + H(+). It functions in the pathway amine and polyamine biosynthesis; spermidine biosynthesis; spermidine from putrescine: step 1/1. In terms of biological role, catalyzes the irreversible transfer of a propylamine group from the amino donor S-adenosylmethioninamine (decarboxy-AdoMet) to putrescine (1,4-diaminobutane) to yield spermidine. The polypeptide is Polyamine aminopropyltransferase (Shigella dysenteriae serotype 1 (strain Sd197)).